The following is a 796-amino-acid chain: U-box domain-containing protein 51 (796 aa).

Disordered regions lie at residues 163 to 195 (DMDT…SSHQ), 218 to 240 (TNIG…SLDV), and 270 to 292 (RSSQ…SSSQ). Over residues 171–181 (ADDRSESRFSS) the composition is skewed to basic and acidic residues. Residues 182-195 (DSHSGTVSSTSSHQ) are compositionally biased toward low complexity. The segment covering 270-291 (RSSQMEEASSSSTYSDPTSSSS) has biased composition (low complexity). The stretch at 298 to 407 (ELEKLKIELR…QRLEDALEGG (110 aa)) forms a coiled coil. Residues 429–700 (FSDELKIGVG…DLGKEILPVL (272 aa)) form the Protein kinase domain. Residues 435–443 (IGVGGYGSV) and Lys456 contribute to the ATP site. Asp557 serves as the catalytic Proton acceptor. The U-box domain occupies 724-796 (NAPTHFYCPI…IKEWRSQLIK (73 aa)).

The protein belongs to the protein kinase superfamily. Ser/Thr protein kinase family.

The enzyme catalyses L-seryl-[protein] + ATP = O-phospho-L-seryl-[protein] + ADP + H(+). It catalyses the reaction L-threonyl-[protein] + ATP = O-phospho-L-threonyl-[protein] + ADP + H(+). The catalysed reaction is S-ubiquitinyl-[E2 ubiquitin-conjugating enzyme]-L-cysteine + [acceptor protein]-L-lysine = [E2 ubiquitin-conjugating enzyme]-L-cysteine + N(6)-ubiquitinyl-[acceptor protein]-L-lysine.. It participates in protein modification; protein ubiquitination. Functionally, functions as an E3 ubiquitin ligase. The sequence is that of U-box domain-containing protein 51 (PUB51) from Arabidopsis thaliana (Mouse-ear cress).